Consider the following 170-residue polypeptide: ATP synthase subunit b (170 aa).

Residues Ile4 to Glu24 form a helical membrane-spanning segment.

This sequence belongs to the ATPase B chain family. F-type ATPases have 2 components, F(1) - the catalytic core - and F(0) - the membrane proton channel. F(1) has five subunits: alpha(3), beta(3), gamma(1), delta(1), epsilon(1). F(0) has three main subunits: a(1), b(2) and c(10-14). The alpha and beta chains form an alternating ring which encloses part of the gamma chain. F(1) is attached to F(0) by a central stalk formed by the gamma and epsilon chains, while a peripheral stalk is formed by the delta and b chains.

It localises to the cell inner membrane. Its function is as follows. F(1)F(0) ATP synthase produces ATP from ADP in the presence of a proton or sodium gradient. F-type ATPases consist of two structural domains, F(1) containing the extramembraneous catalytic core and F(0) containing the membrane proton channel, linked together by a central stalk and a peripheral stalk. During catalysis, ATP synthesis in the catalytic domain of F(1) is coupled via a rotary mechanism of the central stalk subunits to proton translocation. Component of the F(0) channel, it forms part of the peripheral stalk, linking F(1) to F(0). In Aliarcobacter butzleri (strain RM4018) (Arcobacter butzleri), this protein is ATP synthase subunit b.